Reading from the N-terminus, the 286-residue chain is MIVLRNEICDKLENIAKILKFVRHCIGCEGINLEIENPQHHPSIELTQKCNLNCIYCYSRLKTVKRGIYGNLEEAETVTISQYGEPLLDLEGVKKAIEFCKDLGLRVDLQTNGTLLNEEIIKELKDLGLDLIMISLSSFSREKYKLLTGKDYFNRVLNNIKIASKYLHTIVRSIYIPGFNDNELLNLAKELNNYADEIMVHQLISYKENENLLKNAGIDLNNLGRIRDLLLIVDEMQKNAPKINVTIKGCLLVQLKEMDGFILNNITYDVFSEVPDIKREHRPLPW.

One can recognise a Radical SAM core domain in the interval 36–256 (ENPQHHPSIE…IKGCLLVQLK (221 aa)). [4Fe-4S] cluster-binding residues include Cys-50, Cys-54, and Cys-57.

The cofactor is [4Fe-4S] cluster.

This is an uncharacterized protein from Methanocaldococcus jannaschii (strain ATCC 43067 / DSM 2661 / JAL-1 / JCM 10045 / NBRC 100440) (Methanococcus jannaschii).